Consider the following 455-residue polypeptide: Ammonium transporter Rh type B (455 aa).

At 1 to 10 (MARVPRHRRL) the chain is on the cytoplasmic side. A helical membrane pass occupies residues 11 to 31 (VLPLLCLLFQGATALLFAIFV). At 32–58 (RYNHETDAALWHWGNHSNVDNEFYFRY) the chain is on the extracellular side. N-linked (GlcNAc...) asparagine glycosylation occurs at asparagine 46. Residues 59 to 79 (PSFQDVHVMVFVGFGFLMVFL) traverse the membrane as a helical segment. Topologically, residues 80–83 (QRYG) are cytoplasmic. The helical transmembrane segment at 84–104 (FSSVGFTFLVASLTLQWATLL) threads the bilayer. Topologically, residues 105-121 (QGFLHSFHGGHIHVGVE) are extracellular. A helical membrane pass occupies residues 122–142 (SLINADFCAGAVLISFGAVLG). At 143–146 (KTGP) the chain is on the cytoplasmic side. A helical membrane pass occupies residues 147–167 (AQLLLMALLEAVLFSVNEFIL). Over 168–175 (LSLLGVRD) the chain is Extracellular. The chain crosses the membrane as a helical span at residues 176-198 (AGGSMTIHTFGAYFGLFLSWVLY). Residues 199 to 216 (RSQLEKSRHRQSSVYNSD) lie on the Cytoplasmic side of the membrane. The helical transmembrane segment at 217–237 (LFAMIGTIFLWVFWPSFNSAP) threads the bilayer. Residues 238 to 248 (TALGDGQHRTV) lie on the Extracellular side of the membrane. A helical transmembrane segment spans residues 249–269 (VNTYYSLTASTLSTFALSALV). Over 270–279 (SGDGRLDMVH) the chain is Cytoplasmic. The chain crosses the membrane as a helical span at residues 280-300 (VQNAALAGGVVVGTSSEMMLT). Residue proline 301 is a topological domain, extracellular. A helical membrane pass occupies residues 302–322 (FGALAAGFLAGTVSTLGYKFF). Topologically, residues 323-343 (TPILESRFKLQDTCGVHNLHG) are cytoplasmic. The helical transmembrane segment at 344–364 (MPGVLGAILGVVVAALATHEA) threads the bilayer. Residues 365-390 (YGDGLQSVFPLIAKGQRSATSQAVYQ) lie on the Extracellular side of the membrane. A helical membrane pass occupies residues 391–411 (LFGMFVTLVFASVGGSLGGLL). Residues 412 to 455 (LRLPFLDSPPDSQCFEDQVYWEVPGEQETETQRPLRGGESDTRA) lie on the Cytoplasmic side of the membrane. Positions 413 to 421 (RLPFLDSPP) are interaction with ANK3. Residues 434-455 (VPGEQETETQRPLRGGESDTRA) form a disordered region. The segment covering 441–455 (ETQRPLRGGESDTRA) has biased composition (basic and acidic residues).

The protein belongs to the ammonium transporter (TC 2.A.49) family. Rh subfamily. In terms of assembly, interacts (via C-terminus) with ANK2 and ANK3; required for targeting to the basolateral membrane. Post-translationally, N-glycosylated. Expressed in kidney by connecting segments and collecting tubules. Also expressed in liver by perivenous hepatocytes. Expressed in the forestomach and the fundus of the stomach. Expressed in duodenum, jejunum, ileum and colon at the level of villous (at protein level). Specifically expressed in kidney where it is restricted to the epithelial linings of the convoluted tubules and the loop of Henle. Also detected in ovary. Expressed by hepatocytes and dermal hair follicles and papillae.

It is found in the cell membrane. The protein resides in the basolateral cell membrane. It carries out the reaction NH4(+)(in) = NH4(+)(out). It catalyses the reaction methylamine(out) = methylamine(in). The catalysed reaction is CO2(out) = CO2(in). Its activity is regulated as follows. Inhibited by amiloride. Ammonium transporter involved in the maintenance of acid-base homeostasis. Transports ammonium and its related derivative methylammonium across the basolateral plasma membrane of epithelial cells likely contributing to renal transepithelial ammonia transport and ammonia metabolism. May transport either NH4(+) or NH3 ammonia species predominantly mediating an electrogenic NH4(+) transport. May act as a CO2 channel providing for renal acid secretion. The protein is Ammonium transporter Rh type B (Rhbg) of Mus musculus (Mouse).